A 100-amino-acid polypeptide reads, in one-letter code: Large ribosomal subunit protein eL30 (100 aa).

Belongs to the eukaryotic ribosomal protein eL30 family.

The protein is Large ribosomal subunit protein eL30 of Thermococcus sibiricus (strain DSM 12597 / MM 739).